Here is a 484-residue protein sequence, read N- to C-terminus: Malonate-semialdehyde dehydrogenase 1 (484 aa).

The NAD(+) site is built by phenylalanine 153, lysine 177, glutamate 180, arginine 181, serine 230, and threonine 252. Catalysis depends on cysteine 285, which acts as the Nucleophile. Glutamate 385 is an NAD(+) binding site.

The protein belongs to the aldehyde dehydrogenase family. IolA subfamily. Homotetramer.

The catalysed reaction is 3-oxopropanoate + NAD(+) + CoA + H2O = hydrogencarbonate + acetyl-CoA + NADH + H(+). It catalyses the reaction 2-methyl-3-oxopropanoate + NAD(+) + CoA + H2O = propanoyl-CoA + hydrogencarbonate + NADH + H(+). The protein operates within polyol metabolism; myo-inositol degradation into acetyl-CoA; acetyl-CoA from myo-inositol: step 7/7. Its function is as follows. Catalyzes the oxidation of malonate semialdehyde (MSA) and methylmalonate semialdehyde (MMSA) into acetyl-CoA and propanoyl-CoA, respectively. Is involved in a myo-inositol catabolic pathway. Bicarbonate, and not CO2, is the end-product of the enzymatic reaction. This chain is Malonate-semialdehyde dehydrogenase 1, found in Geobacillus thermodenitrificans (strain NG80-2).